The sequence spans 183 residues: Bifunctional protein PyrR (183 aa).

A PRPP-binding motif is present at residues 98–110 (VVLVDDVLYTGRT).

Belongs to the purine/pyrimidine phosphoribosyltransferase family. PyrR subfamily.

It carries out the reaction UMP + diphosphate = 5-phospho-alpha-D-ribose 1-diphosphate + uracil. Functionally, regulates the transcription of the pyrimidine nucleotide (pyr) operon in response to exogenous pyrimidines. Also displays a weak uracil phosphoribosyltransferase activity which is not physiologically significant. This Roseiflexus sp. (strain RS-1) protein is Bifunctional protein PyrR.